We begin with the raw amino-acid sequence, 394 residues long: Phosphatidylinositol 4-phosphate 5-kinase-like protein 1 (394 aa).

A PIPK domain is found at 36–393 (DKQSRLGLFE…RLCQWVEAHT (358 aa)).

In terms of assembly, heterodimerizes with other type I phosphatidylinositol 4-phosphate 5-kinase.

It localises to the cytoplasm. The protein resides in the membrane. It carries out the reaction a 1,2-diacyl-sn-glycero-3-phospho-(1D-myo-inositol 4-phosphate) + ATP = a 1,2-diacyl-sn-glycero-3-phospho-(1D-myo-inositol-4,5-bisphosphate) + ADP + H(+). In terms of biological role, may act as a scaffold to localize and regulate type I PI(4)P 5-kinases to specific compartments within the cell, where they generate PI(4,5)P2 for actin nucleation, signaling and scaffold protein recruitment and conversion to PI(3,4,5)P3. The polypeptide is Phosphatidylinositol 4-phosphate 5-kinase-like protein 1 (PIP5KL1) (Homo sapiens (Human)).